The sequence spans 269 residues: Hydroxyethylthiazole kinase (269 aa).

Position 42 (Met-42) interacts with substrate. Arg-118 and Ser-164 together coordinate ATP. Gly-191 contacts substrate.

This sequence belongs to the Thz kinase family. Mg(2+) is required as a cofactor.

It catalyses the reaction 5-(2-hydroxyethyl)-4-methylthiazole + ATP = 4-methyl-5-(2-phosphooxyethyl)-thiazole + ADP + H(+). Its pathway is cofactor biosynthesis; thiamine diphosphate biosynthesis; 4-methyl-5-(2-phosphoethyl)-thiazole from 5-(2-hydroxyethyl)-4-methylthiazole: step 1/1. In terms of biological role, catalyzes the phosphorylation of the hydroxyl group of 4-methyl-5-beta-hydroxyethylthiazole (THZ). The protein is Hydroxyethylthiazole kinase of Listeria welshimeri serovar 6b (strain ATCC 35897 / DSM 20650 / CCUG 15529 / CIP 8149 / NCTC 11857 / SLCC 5334 / V8).